Here is a 474-residue protein sequence, read N- to C-terminus: MADNDIIHTVPEMRRIRGIHFVGIGGVGMCGIAEVLANQGYAISGSDIKESPVLERLRSLGVRVDIGHRAENIDGADVVVTSTAVNTENLEVAAAHERRIPVVPRAQMLAELMRFRHGIAVAGTHGKTTTTSLTAAIMAEAGLDPTFVIGGRLNSAGTNARLGQSRYLVAEADESDASFLHLQPMSAIVTNVDADHMHTYGGDFAQLENTFIEFLHNLPFYGVAVMCVDDPVVRKLLPRVNRQVIRYGFSEDADLRAENVRQDGMVTHFRVVRAEGEPLDVSLNMPGRHNVLNALAAIAVSADEGAGDEAIIRGLNNFTGVGRRFDVQGDYHFDGGSATLVDDYGHHPREVAATIDAIREGWPGRRLAMLFQPHRYTRTQDLYEDFVEVLSGVDVLLMLEVYAAGEEPIPGADARALCRSLRKRGLEPVFVDDPDKLQGLLASQLQNGDLLVTQGAGNVGAIAKQLVAQGGGHG.

Position 123 to 129 (123 to 129 (GTHGKTT)) interacts with ATP.

Belongs to the MurCDEF family.

It localises to the cytoplasm. The catalysed reaction is UDP-N-acetyl-alpha-D-muramate + L-alanine + ATP = UDP-N-acetyl-alpha-D-muramoyl-L-alanine + ADP + phosphate + H(+). It functions in the pathway cell wall biogenesis; peptidoglycan biosynthesis. Its function is as follows. Cell wall formation. The chain is UDP-N-acetylmuramate--L-alanine ligase from Alcanivorax borkumensis (strain ATCC 700651 / DSM 11573 / NCIMB 13689 / SK2).